The primary structure comprises 332 residues: L-lactate dehydrogenase A chain (332 aa).

NAD(+) contacts are provided by residues 29–57 (GMVG…MEDK) and R99. R106, N138, and R169 together coordinate substrate. Residue N138 coordinates NAD(+). H193 functions as the Proton acceptor in the catalytic mechanism. T248 contacts substrate.

Belongs to the LDH/MDH superfamily. LDH family. As to quaternary structure, homotetramer.

The protein resides in the cytoplasm. It carries out the reaction (S)-lactate + NAD(+) = pyruvate + NADH + H(+). The protein operates within fermentation; pyruvate fermentation to lactate; (S)-lactate from pyruvate: step 1/1. Its function is as follows. Interconverts simultaneously and stereospecifically pyruvate and lactate with concomitant interconversion of NADH and NAD(+). This chain is L-lactate dehydrogenase A chain (ldha), found in Gillichthys seta (Shortjaw mudsucker).